Reading from the N-terminus, the 62-residue chain is Amolopin-P2 (62 aa).

The signal sequence occupies residues 1–22 (MFTLKKSLLLLFFLGTISLSLC). A propeptide spanning residues 23 to 44 (EQERGADEEENGGEVTEQEVKR) is cleaved from the precursor.

Belongs to the frog skin active peptide (FSAP) family. Amolopin subfamily. Expressed by the skin glands.

Its subcellular location is the secreted. Its function is as follows. Antimicrobial peptide with activity against Gram-positive bacteria. Has been tested against S.aureus (MIC=37.5 ug/mL), against B.pumilus (MIC=75.0 ug/mL), B.cereus (no activity detected). Does not show activity against Gram-negative bacteria (E.coli, B.dysenteriae, A.calcoaceticus, P.aeruginosa) and fungi (C.albicans). Does not show hemolytic activity against rabbit erythrocytes. The polypeptide is Amolopin-P2 (Amolops loloensis (Lolokou Sucker Frog)).